The following is a 122-amino-acid chain: Ribonuclease P protein component 1 (122 aa).

This sequence belongs to the eukaryotic/archaeal RNase P protein component 1 family. In terms of assembly, consists of a catalytic RNA component and at least 4-5 protein subunits.

It is found in the cytoplasm. It catalyses the reaction Endonucleolytic cleavage of RNA, removing 5'-extranucleotides from tRNA precursor.. Part of ribonuclease P, a protein complex that generates mature tRNA molecules by cleaving their 5'-ends. This is Ribonuclease P protein component 1 from Thermococcus sibiricus (strain DSM 12597 / MM 739).